Here is a 99-residue protein sequence, read N- to C-terminus: Cystatin (99 aa).

In terms of domain architecture, Cystatin spans 3 to 99 (GGLSPRSVSD…EEKLCGFQVW (97 aa)). The short motif at 47 to 51 (QSVAG) is the Secondary area of contact element. C65 and C81 form a disulfide bridge.

Belongs to the cystatin family. As to expression, expressed by the venom gland.

It localises to the secreted. Its function is as follows. Inhibits various C1 cysteine proteases including cathepsin L (Ki is 0.1 nM), papain (Ki is 0.19 nM), cathepsin S (Ki is 1.2 nM), and cathepsin B (Ki is 2.5 nM). This protein has no toxic activity and its function in the venom is unknown. It may play a role as housekeeping or regulatory protein. This chain is Cystatin, found in Naja atra (Chinese cobra).